A 91-amino-acid chain; its full sequence is Small ribosomal subunit protein uS15 (91 aa).

Belongs to the universal ribosomal protein uS15 family. Part of the 30S ribosomal subunit. Forms a bridge to the 50S subunit in the 70S ribosome, contacting the 23S rRNA.

One of the primary rRNA binding proteins, it binds directly to 16S rRNA where it helps nucleate assembly of the platform of the 30S subunit by binding and bridging several RNA helices of the 16S rRNA. Its function is as follows. Forms an intersubunit bridge (bridge B4) with the 23S rRNA of the 50S subunit in the ribosome. The sequence is that of Small ribosomal subunit protein uS15 from Rickettsia typhi (strain ATCC VR-144 / Wilmington).